Consider the following 118-residue polypeptide: Large ribosomal subunit protein uL23c (118 aa).

This sequence belongs to the universal ribosomal protein uL23 family. As to quaternary structure, part of the 50S ribosomal subunit.

It is found in the plastid. The protein resides in the chloroplast. Its function is as follows. Binds to 23S rRNA. This chain is Large ribosomal subunit protein uL23c (rpl23), found in Stigeoclonium helveticum (Green alga).